A 146-amino-acid polypeptide reads, in one-letter code: Putative type II restriction enzyme MjaORF1200P (146 aa).

This sequence to A.pernix APE2001.

It catalyses the reaction Endonucleolytic cleavage of DNA to give specific double-stranded fragments with terminal 5'-phosphates.. In terms of biological role, a putative type II restriction enzyme, its methylase would be M.MjaORF1200P (AC Q58600). This Methanocaldococcus jannaschii (strain ATCC 43067 / DSM 2661 / JAL-1 / JCM 10045 / NBRC 100440) (Methanococcus jannaschii) protein is Putative type II restriction enzyme MjaORF1200P.